The following is a 260-amino-acid chain: Snake venom serine protease 2 (260 aa).

A signal peptide spans 1 to 18 (MVLIRVLANLLILQLFYA). Positions 19-24 (QKSSEL) are excised as a propeptide. The Peptidase S1 domain occupies 25–251 (IIGGDECNIN…HLDWIKSIIA (227 aa)). Disulfide bonds link Cys31–Cys165, Cys52–Cys68, Cys100–Cys258, Cys144–Cys212, Cys176–Cys191, and Cys202–Cys227. Residues Asn123 and Asn124 are each glycosylated (N-linked (GlcNAc...) asparagine).

Belongs to the peptidase S1 family. Snake venom subfamily. Monomer. In terms of tissue distribution, expressed by the venom gland.

The protein localises to the secreted. Its function is as follows. Snake venom serine protease that may act in the hemostasis system of the prey. This Protobothrops flavoviridis (Habu) protein is Snake venom serine protease 2 (TLF2).